We begin with the raw amino-acid sequence, 156 residues long: Arginine repressor (156 aa).

The protein belongs to the ArgR family.

It is found in the cytoplasm. Its pathway is amino-acid biosynthesis; L-arginine biosynthesis [regulation]. Regulates arginine biosynthesis genes. The polypeptide is Arginine repressor (Shewanella pealeana (strain ATCC 700345 / ANG-SQ1)).